A 352-amino-acid polypeptide reads, in one-letter code: tRNA(Ile)-lysidine synthase (352 aa).

58-63 lines the ATP pocket; sequence SGGADS.

The protein belongs to the tRNA(Ile)-lysidine synthase family.

It localises to the cytoplasm. It catalyses the reaction cytidine(34) in tRNA(Ile2) + L-lysine + ATP = lysidine(34) in tRNA(Ile2) + AMP + diphosphate + H(+). Its function is as follows. Ligates lysine onto the cytidine present at position 34 of the AUA codon-specific tRNA(Ile) that contains the anticodon CAU, in an ATP-dependent manner. Cytidine is converted to lysidine, thus changing the amino acid specificity of the tRNA from methionine to isoleucine. The protein is tRNA(Ile)-lysidine synthase of Streptomyces coelicolor (strain ATCC BAA-471 / A3(2) / M145).